The chain runs to 351 residues: Transmembrane protein 185-like (351 aa).

A run of 8 helical transmembrane segments spans residues 16-36 (LIYACLLLFSVLLSLRLDGII), 41-61 (WAVFAPIWLWKLMVIIGASVG), 81-101 (FKAMLIAVGIHLLLLTFEVLV), 113-133 (WLLVFMPLFFVSPVSVAACVW), 154-174 (FIFIALKLDGIISWPWLVVCV), 178-198 (ILMSFLCLVVLYYIVWSVLFL), 212-232 (ITMAISWMTIVVPLLTFEILL), and 244-264 (YVPVFVPLWVSLVTLMVTTFG).

It belongs to the TMEM185 family.

It is found in the membrane. This Danio rerio (Zebrafish) protein is Transmembrane protein 185-like.